Consider the following 221-residue polypeptide: Casparian strip membrane protein 3 (221 aa).

Positions 1–12 are enriched in basic and acidic residues; it reads MDIEKAGSRREE. The interval 1–27 is disordered; that stretch reads MDIEKAGSRREEEEPIVQRPKLDKGKG. The Cytoplasmic portion of the chain corresponds to 1–58; it reads MDIEKAGSRREEEEPIVQRPKLDKGKGKAHVFAPPMNYNRIMDKHKQEKMSPAGWKRG. A helical membrane pass occupies residues 59–79; it reads VAIFDFVLRLIAAITAMAAAA. Residues 80–109 lie on the Extracellular side of the membrane; it reads KMATTEETLPFFTQFLQFQADYTDLPTMSS. A helical transmembrane segment spans residues 110-130; sequence FVIVNSIVGGYLTLSLPFSIV. Residues 131–148 lie on the Cytoplasmic side of the membrane; it reads CILRPLAVPPRLFLILCD. Residues 149 to 169 form a helical membrane-spanning segment; the sequence is TVMMGLTLMAASASAAIVYLA. Over 170–194 the chain is Extracellular; the sequence is HNGNSSSNWLPVCQQFGDFCQGTSG. Asparagine 173 carries N-linked (GlcNAc...) asparagine glycosylation. Residues 195–215 traverse the membrane as a helical segment; it reads AVVASFIAATLLMFLVILSAF. Residues 216 to 221 are Cytoplasmic-facing; the sequence is ALKRTT.

The protein belongs to the Casparian strip membrane proteins (CASP) family. In terms of assembly, homodimer and heterodimers with other CASP proteins. Interacts with CASP1, CASP2, CASP4 and CASP5.

Its subcellular location is the cell membrane. Functionally, regulates membrane-cell wall junctions and localized cell wall deposition. Required for establishment of the Casparian strip membrane domain (CSD) and the subsequent formation of Casparian strips, a cell wall modification of the root endodermis that determines an apoplastic barrier between the intraorganismal apoplasm and the extraorganismal apoplasm and prevents lateral diffusion. The sequence is that of Casparian strip membrane protein 3 (CASP3) from Arabidopsis thaliana (Mouse-ear cress).